A 278-amino-acid polypeptide reads, in one-letter code: Large ribosomal subunit protein uL2 (278 aa).

Residues 201-278 (HGNINDGKAG…IMRSRHQRKK (78 aa)) form a disordered region. Positions 210 to 221 (GRSRWRGKRPHV) are enriched in basic residues.

This sequence belongs to the universal ribosomal protein uL2 family. As to quaternary structure, part of the 50S ribosomal subunit. Forms a bridge to the 30S subunit in the 70S ribosome.

Its function is as follows. One of the primary rRNA binding proteins. Required for association of the 30S and 50S subunits to form the 70S ribosome, for tRNA binding and peptide bond formation. It has been suggested to have peptidyltransferase activity; this is somewhat controversial. Makes several contacts with the 16S rRNA in the 70S ribosome. The protein is Large ribosomal subunit protein uL2 of Agrobacterium fabrum (strain C58 / ATCC 33970) (Agrobacterium tumefaciens (strain C58)).